A 205-amino-acid polypeptide reads, in one-letter code: Suppressor of IKBKE 1 (205 aa).

Coiled-coil stretches lie at residues 4-32 (TIDK…LIDQ) and 154-192 (KAIQ…ESLR).

This sequence belongs to the SIKE family. In terms of assembly, interacts with IKBKE and TBK1 via its coiled coil region. Interaction with TBK1 is disrupted upon viral infection or TLR3 stimulation. Interacts with CDC42BPB. Associates with the STRIPAK core complex composed of PP2A catalytic and scaffolding subunits, the striatins (PP2A regulatory subunits), the striatin-associated proteins MOB4, STRIP1 and STRIP2, PDCD10 and members of the STE20 kinases, such as STK24 and STK26.

It is found in the cytoplasm. In terms of biological role, suppressor of IKK-epsilon. Associates with the striatin-interacting phosphatase and kinase (STRIPAK) core complex, forming the extended (SIKE1:SLMAP)STRIPAK complex. The (SIKE1:SLMAP)STRIPAK complex dephosphorylates STK3 leading to the inhibition of Hippo signaling and the control of cell growth. The polypeptide is Suppressor of IKBKE 1 (sike1) (Xenopus laevis (African clawed frog)).